Here is a 43-residue protein sequence, read N- to C-terminus: Large ribosomal subunit protein uL11 (43 aa).

This sequence belongs to the universal ribosomal protein uL11 family. Part of the ribosomal stalk of the 50S ribosomal subunit. Interacts with L10 and the large rRNA to form the base of the stalk. L10 forms an elongated spine to which L12 dimers bind in a sequential fashion forming a multimeric L10(L12)X complex. Post-translationally, one or more lysine residues are methylated.

Functionally, forms part of the ribosomal stalk which helps the ribosome interact with GTP-bound translation factors. The chain is Large ribosomal subunit protein uL11 (rplK) from Streptomyces galbus.